Consider the following 420-residue polypeptide: Serine--tRNA ligase (420 aa).

229–231 (TAE) is an L-serine binding site. Residue 260 to 262 (RAE) participates in ATP binding. Residue Glu-283 coordinates L-serine. 347–350 (EISS) lines the ATP pocket. Ser-382 is a binding site for L-serine.

The protein belongs to the class-II aminoacyl-tRNA synthetase family. Type-1 seryl-tRNA synthetase subfamily. As to quaternary structure, homodimer. The tRNA molecule binds across the dimer.

It is found in the cytoplasm. It catalyses the reaction tRNA(Ser) + L-serine + ATP = L-seryl-tRNA(Ser) + AMP + diphosphate + H(+). The enzyme catalyses tRNA(Sec) + L-serine + ATP = L-seryl-tRNA(Sec) + AMP + diphosphate + H(+). It functions in the pathway aminoacyl-tRNA biosynthesis; selenocysteinyl-tRNA(Sec) biosynthesis; L-seryl-tRNA(Sec) from L-serine and tRNA(Sec): step 1/1. Functionally, catalyzes the attachment of serine to tRNA(Ser). Is also able to aminoacylate tRNA(Sec) with serine, to form the misacylated tRNA L-seryl-tRNA(Sec), which will be further converted into selenocysteinyl-tRNA(Sec). The sequence is that of Serine--tRNA ligase from Caldicellulosiruptor bescii (strain ATCC BAA-1888 / DSM 6725 / KCTC 15123 / Z-1320) (Anaerocellum thermophilum).